A 541-amino-acid polypeptide reads, in one-letter code: Putative acyl-CoA dehydrogenase AidB (541 aa).

FAD-binding positions include 182–191, threonine 185, serine 191, 216–218, serine 218, 423–433, and asparagine 429; these read MGMTEKQGGS, FFS, and IWEGSGNIMCL. The segment at 445-541 is dsDNA-binding; sequence VYDLLSEAFV…LLRATGGVCV (97 aa).

It belongs to the acyl-CoA dehydrogenase family. As to quaternary structure, homotetramer. Dimer of dimers. Requires FAD as cofactor.

It is found in the cytoplasm. Functionally, part of the adaptive DNA-repair response to alkylating agents. Could prevent alkylation damage by protecting DNA and destroying alkylating agents that have yet to reach their DNA target. Binds to double-stranded DNA with a preference for a DNA region that includes its own promoter. Shows weak isovaleryl-CoA dehydrogenase activity in vitro. This Escherichia coli (strain K12) protein is Putative acyl-CoA dehydrogenase AidB (aidB).